The primary structure comprises 237 residues: 2-C-methyl-D-erythritol 4-phosphate cytidylyltransferase (237 aa).

Belongs to the IspD/TarI cytidylyltransferase family. IspD subfamily.

The catalysed reaction is 2-C-methyl-D-erythritol 4-phosphate + CTP + H(+) = 4-CDP-2-C-methyl-D-erythritol + diphosphate. Its pathway is isoprenoid biosynthesis; isopentenyl diphosphate biosynthesis via DXP pathway; isopentenyl diphosphate from 1-deoxy-D-xylulose 5-phosphate: step 2/6. Its function is as follows. Catalyzes the formation of 4-diphosphocytidyl-2-C-methyl-D-erythritol from CTP and 2-C-methyl-D-erythritol 4-phosphate (MEP). This chain is 2-C-methyl-D-erythritol 4-phosphate cytidylyltransferase, found in Vibrio vulnificus (strain CMCP6).